Consider the following 170-residue polypeptide: Small ribosomal subunit protein bS18c (170 aa).

A disordered region spans residues 1–61; sequence MYTSKQPFLK…RRPRIGPGDR (61 aa). Positions 13–26 are enriched in polar residues; the sequence is QPFSKSKQTFNKSK. A compositionally biased stretch (basic residues) spans 27–55; that stretch reads QPFRKSKQTFRKFKQPFRKSKQPFRRRPR.

Belongs to the bacterial ribosomal protein bS18 family. Part of the 30S ribosomal subunit.

The protein resides in the plastid. It localises to the chloroplast. This Hordeum vulgare (Barley) protein is Small ribosomal subunit protein bS18c.